The chain runs to 741 residues: Lamin-B receptor (741 aa).

The tract at residues 29-126 (RLRRPRRTED…TGSGSGSSLP (98 aa)) is disordered. 2 stretches are compositionally biased toward low complexity: residues 57–84 (TRRTGSVTAAGATATATATAGPATRTRA) and 109–126 (PRSSVGPLTGSGSGSSLP). The residue at position 111 (Ser111) is a Phosphoserine. Thr135 is modified (phosphothreonine). Position 144 is a phosphoserine (Ser144). Residues 160–184 (TNTSSGAPNKAFNTSSVNSGNSFSR) show a composition bias toward polar residues. Positions 160–194 (TNTSSGAPNKAFNTSSVNSGNSFSRTTTSSTTTTT) are disordered. A compositionally biased stretch (low complexity) spans 185–194 (TTTSSTTTTT). Phosphoserine is present on residues Ser223 and Ser225. Polar residues predominate over residues 231 to 240 (LAGTPVTNTE). A disordered region spans residues 231–277 (LAGTPVTNTEEGSRYSRSVSRSVYDDEKSSKRSYSTGEEDIDEEDEL). Phosphothreonine occurs at positions 234 and 237. Ser243, Ser246, Ser248, Ser250, and Ser263 each carry phosphoserine. Thr266 bears the Phosphothreonine mark. A compositionally biased stretch (acidic residues) spans 267–277 (GEEDIDEEDEL). Phosphoserine is present on Ser284. Thr288 is modified (phosphothreonine). Ser291 carries the phosphoserine modification. Thr293 bears the Phosphothreonine mark. Ser298 bears the Phosphoserine mark. 8 consecutive transmembrane segments (helical) span residues 308–328 (FGGWLGAFLFLLLLPTAVYYL), 363–383 (VVGAFAAYQVVVFLLVALLPG), 402–422 (LTLLIASGVAEYLKYPVVTFV), 429–449 (FCIFGLVGAFVAAAWSYWLVD), 497–517 (LSLVTTLIYATCYIYQTLVWP), 543–563 (PATLFSASCLLFYVLDAIIFE), 577–599 (YGCLLLLRYAATPYLLTAVTKYF), and 604–624 (VPISCWYAPLAVAALLSLGLL). 2 positions are modified to phosphoserine: Ser640 and Ser642. Residues 687–707 (MALRPAWPPVLGLSLIILLLL) traverse the membrane as a helical segment.

This sequence belongs to the ERG4/ERG24 family. In terms of assembly, interacts directly with LAM.

The protein resides in the nucleus inner membrane. Functionally, anchors the lamina and the heterochromatin to the inner nuclear membrane. The sequence is that of Lamin-B receptor from Drosophila melanogaster (Fruit fly).